The primary structure comprises 197 residues: Protein-S-isoprenylcysteine O-methyltransferase A (197 aa).

3 consecutive transmembrane segments (helical) span residues 16 to 36 (MLLS…TIHG), 52 to 72 (ALAM…FPGL), and 81 to 101 (FGLI…ITAG). Residues 116 to 119 (HGLV), Tyr-124, and 129 to 132 (HPSY) each bind S-adenosyl-L-methionine. Residues 140 to 160 (VGTQVMLCNPVSAVAFAVVVW) form a helical membrane-spanning segment. Position 166 (Arg-166) interacts with substrate. Glu-170 is a binding site for S-adenosyl-L-methionine.

This sequence belongs to the class VI-like SAM-binding methyltransferase superfamily. Isoprenylcysteine carboxyl methyltransferase family. The cofactor is Zn(2+). As to expression, expressed primarily in flowers, stems, leaves and roots. Almost not expressed in siliques. Detected in root tips and vascular tissues of roots, cotyledons, petiols, hypocotyls, filaments, pollen grains and the distal and proximal portions of the gynoecium.

The protein resides in the endoplasmic reticulum membrane. The enzyme catalyses [protein]-C-terminal S-[(2E,6E)-farnesyl]-L-cysteine + S-adenosyl-L-methionine = [protein]-C-terminal S-[(2E,6E)-farnesyl]-L-cysteine methyl ester + S-adenosyl-L-homocysteine. Its activity is regulated as follows. Inhibited by farnesylthioacetic acid (FTAA) and N-acetyl-S-trans, trans-farnesyl-l-cysteine (AFC). Catalyzes the post-translational methylation of isoprenylated C-terminal cysteine residues, resulting in the modulation of the function of prenylated proteins. Involved in negative regulation of abscisic acid signaling. Carboxyl methylation is a reversible and potentially regulated step in the post-translational modification of prenylated proteins. The sequence is that of Protein-S-isoprenylcysteine O-methyltransferase A from Arabidopsis thaliana (Mouse-ear cress).